The following is a 476-amino-acid chain: Argininosuccinate lyase (476 aa).

It belongs to the lyase 1 family. Argininosuccinate lyase subfamily.

The protein localises to the cytoplasm. It carries out the reaction 2-(N(omega)-L-arginino)succinate = fumarate + L-arginine. It functions in the pathway amino-acid biosynthesis; L-arginine biosynthesis; L-arginine from L-ornithine and carbamoyl phosphate: step 3/3. The sequence is that of Argininosuccinate lyase from Leptothrix cholodnii (strain ATCC 51168 / LMG 8142 / SP-6) (Leptothrix discophora (strain SP-6)).